The following is a 176-amino-acid chain: NAD(P)H-quinone oxidoreductase subunit 6, chloroplastic (176 aa).

The next 5 helical transmembrane spans lie at Phe-10 to Thr-30, Pro-32 to Leu-52, Ala-61 to Met-81, Leu-92 to Ile-112, and Phe-152 to Ala-172.

Belongs to the complex I subunit 6 family. NDH is composed of at least 16 different subunits, 5 of which are encoded in the nucleus.

It localises to the plastid. The protein localises to the chloroplast thylakoid membrane. It catalyses the reaction a plastoquinone + NADH + (n+1) H(+)(in) = a plastoquinol + NAD(+) + n H(+)(out). The catalysed reaction is a plastoquinone + NADPH + (n+1) H(+)(in) = a plastoquinol + NADP(+) + n H(+)(out). Functionally, NDH shuttles electrons from NAD(P)H:plastoquinone, via FMN and iron-sulfur (Fe-S) centers, to quinones in the photosynthetic chain and possibly in a chloroplast respiratory chain. The immediate electron acceptor for the enzyme in this species is believed to be plastoquinone. Couples the redox reaction to proton translocation, and thus conserves the redox energy in a proton gradient. The chain is NAD(P)H-quinone oxidoreductase subunit 6, chloroplastic (ndhG) from Oenothera argillicola (Appalachian evening primrose).